The following is a 269-amino-acid chain: Mitochondrial scaffolding protein 1 (269 aa).

The PDZ domain occupies 49 to 121 (VVEIEKTSKG…HDEAVEVFRS (73 aa)). Residues 143-185 (RTQTPTASVSITPQVTPQTRSTQNNTDTPKSMSHSESKSRLTS) form a disordered region. Residues 145–174 (QTPTASVSITPQVTPQTRSTQNNTDTPKSM) are compositionally biased toward polar residues. The chain crosses the membrane as a helical span at residues 240–262 (WLTEALYVSIGLGALTISGYLAY).

The protein localises to the membrane. Its function is as follows. Plays a role in the regulation of lifespan in a partially daf-16-mediated manner, and may be involved in regulating the levels of reactive oxygen species production in response to heat stress. In Caenorhabditis elegans, this protein is Mitochondrial scaffolding protein 1.